The following is a 353-amino-acid chain: Putative transport protein YrrI (353 aa).

Transmembrane regions (helical) follow at residues 8–28 (LLLW…FFML), 37–57 (LVIK…YLLL), 77–97 (IYVL…PVLI), 165–185 (FLIA…IELM), 220–240 (LLVC…FGLP), 243–263 (LILG…PFIG), 269–289 (LIAM…VFIL), and 311–331 (VVIM…GMIL).

The protein belongs to the autoinducer-2 exporter (AI-2E) (TC 2.A.86) family.

The protein resides in the cell membrane. The polypeptide is Putative transport protein YrrI (yrrI) (Bacillus subtilis (strain 168)).